A 320-amino-acid chain; its full sequence is Aminoacyl tRNA synthase complex-interacting multifunctional protein 2 (320 aa).

At S36 the chain carries Phosphoserine. The interaction with PRKN stretch occupies residues 82–162; the sequence is TPDADLDVTN…HTHSSVKNVP (81 aa). An interaction with TP53 region spans residues 162–225; it reads PENLVKCFGE…FLFSLFGQKH (64 aa). Residues 220–317 form the GST C-terminal domain; the sequence is LFGQKHNAVT…NLAPFSTALQ (98 aa).

In terms of assembly, part of the multisynthetase complex (MSC), a multisubunit complex that groups tRNA ligases for Arg (RARS1), Asp (DARS1), Gln (QARS1), Ile (IARS1), Leu (LARS1), Lys (KARS1), Met (MARS1) the bifunctional ligase for Glu and Pro (EPRS1) and the auxiliary subunits AIMP1/p43, AIMP2/p38 and EEF1E1/p18. Interacts (via N-terminus) with KARS1. Interacts with EPRS1. Forms a linear complex that contains MARS1, EEF1E1, EPRS1 and AIMP2 that is at the core of the multisubunit complex. Binds FUBP1 (via C-terminus). Interacts in both its unphosphorylated and phosphorylated forms with p53/TP53 (via N-terminus) in the nucleus following UV irradiation. Interacts (via N-terminus) with PRKN/parkin (via first RING-type domain). Interacts with TARS3. Phosphorylated on serine residues in response to UV irradiation. Post-translationally, ubiquitinated by PRKN, leading to its degradation by the proteasome.

The protein localises to the cytoplasm. It localises to the cytosol. Its subcellular location is the nucleus. In terms of biological role, required for assembly and stability of the aminoacyl-tRNA synthase complex. Mediates ubiquitination and degradation of FUBP1, a transcriptional activator of MYC, leading to MYC down-regulation which is required for aveolar type II cell differentiation. Blocks MDM2-mediated ubiquitination and degradation of p53/TP53. Functions as a proapoptotic factor. This Mus musculus (Mouse) protein is Aminoacyl tRNA synthase complex-interacting multifunctional protein 2 (Aimp2).